Here is a 311-residue protein sequence, read N- to C-terminus: Methionyl-tRNA formyltransferase (311 aa).

A (6S)-5,6,7,8-tetrahydrofolate-binding site is contributed by 110–113; that stretch reads SLLP.

This sequence belongs to the Fmt family.

It carries out the reaction L-methionyl-tRNA(fMet) + (6R)-10-formyltetrahydrofolate = N-formyl-L-methionyl-tRNA(fMet) + (6S)-5,6,7,8-tetrahydrofolate + H(+). Functionally, attaches a formyl group to the free amino group of methionyl-tRNA(fMet). The formyl group appears to play a dual role in the initiator identity of N-formylmethionyl-tRNA by promoting its recognition by IF2 and preventing the misappropriation of this tRNA by the elongation apparatus. The sequence is that of Methionyl-tRNA formyltransferase from Streptococcus pneumoniae serotype 19F (strain G54).